Here is a 569-residue protein sequence, read N- to C-terminus: Glutamyl-tRNA reductase (569 aa).

Residues 49-52 (TCNR), Ser109, 114-116 (EGQ), and Gln120 each bind substrate. The Nucleophile role is filled by Cys50. 192 to 197 (GAGSMS) contributes to the NADP(+) binding site. Positions 284–397 (PVAVREETPA…VEAPRPAPAL (114 aa)) are insert. The tract at residues 546-569 (AAVSRADDRDTSDSTENAKNRGRE) is disordered. Residues 550-569 (RADDRDTSDSTENAKNRGRE) show a composition bias toward basic and acidic residues.

It belongs to the glutamyl-tRNA reductase family. Homodimer.

The catalysed reaction is (S)-4-amino-5-oxopentanoate + tRNA(Glu) + NADP(+) = L-glutamyl-tRNA(Glu) + NADPH + H(+). It functions in the pathway porphyrin-containing compound metabolism; protoporphyrin-IX biosynthesis; 5-aminolevulinate from L-glutamyl-tRNA(Glu): step 1/2. Functionally, catalyzes the NADPH-dependent reduction of glutamyl-tRNA(Glu) to glutamate 1-semialdehyde (GSA). The protein is Glutamyl-tRNA reductase of Streptomyces avermitilis (strain ATCC 31267 / DSM 46492 / JCM 5070 / NBRC 14893 / NCIMB 12804 / NRRL 8165 / MA-4680).